The chain runs to 269 residues: uncharacterized protein (269 aa).

This is an uncharacterized protein from Acanthamoeba polyphaga (Amoeba).